The following is a 366-amino-acid chain: MKMSFRWYGKKDPVTLEEIKAIPGMQGIVTAVYDVPVGQAWPLENILELKQMVEEAGLEITVIESIPVHEDIKQGKPNRDELIENYKTSIRNVGAAGIPVVCYNFMPVFDWTRSDLHHPLPDGSTSLAFLKSDLAGVDPVADDLNLPGWDSSYSKEEMKNVIENYRQNISEEDLWANLEYFIKAIMPTAEEAGVKMAIHPDDPPYGIFGLPRIITGQEAVERFLNLYDSEHNGITMCVGSYASDPKNDVLAMTEYALKRNRINFMHTRNVTAGAWGFQETAHLSQSGDIDMNGVVKLLVDYDWQGALRPDHGRRIWGDQTKTPGYGLYDRALGATYFNGLYEANMRAAGKTPDFGIKVKTVGNKEG.

The protein belongs to the mannonate dehydratase family. Requires Fe(2+) as cofactor. The cofactor is Mn(2+).

It carries out the reaction D-mannonate = 2-dehydro-3-deoxy-D-gluconate + H2O. Its pathway is carbohydrate metabolism; pentose and glucuronate interconversion. Functionally, catalyzes the dehydration of D-mannonate. The sequence is that of Mannonate dehydratase from Streptococcus pneumoniae (strain 70585).